Here is a 229-residue protein sequence, read N- to C-terminus: NAD(P)H-hydrate epimerase (229 aa).

In terms of domain architecture, YjeF N-terminal spans alanine 10 to leucine 217. A (6S)-NADPHX-binding site is contributed by asparagine 60–aspartate 64. K(+)-binding residues include asparagine 61 and aspartate 125. (6S)-NADPHX is bound by residues glycine 129 to proline 135 and aspartate 158. Serine 161 provides a ligand contact to K(+).

The protein belongs to the NnrE/AIBP family. The cofactor is K(+).

The enzyme catalyses (6R)-NADHX = (6S)-NADHX. It catalyses the reaction (6R)-NADPHX = (6S)-NADPHX. Functionally, catalyzes the epimerization of the S- and R-forms of NAD(P)HX, a damaged form of NAD(P)H that is a result of enzymatic or heat-dependent hydration. This is a prerequisite for the S-specific NAD(P)H-hydrate dehydratase to allow the repair of both epimers of NAD(P)HX. In Drosophila ananassae (Fruit fly), this protein is NAD(P)H-hydrate epimerase.